We begin with the raw amino-acid sequence, 376 residues long: NAD-capped RNA hydrolase (376 aa).

Zn(2+)-binding residues include cysteine 182, cysteine 185, cysteine 200, and cysteine 211. Substrate-binding positions include tyrosine 222, 258–260 (AGF), glutamate 274, glutamate 278, and glutamate 321. Positions 223-351 (PRTDPCVIMV…KDGPAPILFP (129 aa)) constitute a Nudix hydrolase domain. Alanine 258, glutamate 274, glutamate 278, and glutamate 321 together coordinate Mg(2+). The Nudix box signature appears at 259-280 (GFLEPGESLEEAVVRETYEESG). Residues 374-376 (VKM) carry the Microbody targeting signal motif.

It belongs to the Nudix hydrolase family. NudC subfamily. Homodimer. Mg(2+) serves as cofactor. Zn(2+) is required as a cofactor.

It catalyses the reaction a 5'-end NAD(+)-phospho-ribonucleoside in mRNA + H2O = a 5'-end phospho-adenosine-phospho-ribonucleoside in mRNA + beta-nicotinamide D-ribonucleotide + 2 H(+). It carries out the reaction NAD(+) + H2O = beta-nicotinamide D-ribonucleotide + AMP + 2 H(+). The enzyme catalyses NADH + H2O = reduced beta-nicotinamide D-ribonucleotide + AMP + 2 H(+). Functionally, mRNA decapping enzyme that specifically removes the nicotinamide adenine dinucleotide (NAD) cap from a subset of mRNAs by hydrolyzing the diphosphate linkage to produce nicotinamide mononucleotide (NMN) and 5' monophosphate mRNA. The NAD-cap is present at the 5'-end of some RNAs; in contrast to the canonical N7 methylguanosine (m7G) cap, the NAD cap promotes mRNA decay. Mediates the hydrolysis of some nucleoside diphosphate derivatives. In Schizosaccharomyces pombe (strain 972 / ATCC 24843) (Fission yeast), this protein is NAD-capped RNA hydrolase.